We begin with the raw amino-acid sequence, 548 residues long: Chaperonin GroEL (548 aa).

Residues 29 to 32, 86 to 90, Gly413, 476 to 478, and Asp492 each bind ATP; these read TLGP, DGTTT, and NAL. A compositionally biased stretch (acidic residues) spans 522–531; sequence PDEDDNDDGD. Residues 522 to 548 are disordered; it reads PDEDDNDDGDMGGGAPGMGGMGGMPGM. Residues 532-548 are compositionally biased toward gly residues; that stretch reads MGGGAPGMGGMGGMPGM.

The protein belongs to the chaperonin (HSP60) family. Forms a cylinder of 14 subunits composed of two heptameric rings stacked back-to-back. Interacts with the co-chaperonin GroES.

Its subcellular location is the cytoplasm. The catalysed reaction is ATP + H2O + a folded polypeptide = ADP + phosphate + an unfolded polypeptide.. In terms of biological role, together with its co-chaperonin GroES, plays an essential role in assisting protein folding. The GroEL-GroES system forms a nano-cage that allows encapsulation of the non-native substrate proteins and provides a physical environment optimized to promote and accelerate protein folding. In Natranaerobius thermophilus (strain ATCC BAA-1301 / DSM 18059 / JW/NM-WN-LF), this protein is Chaperonin GroEL.